Reading from the N-terminus, the 130-residue chain is Cytochrome c-type biogenesis protein CcmE (130 aa).

Over methionine 1 to arginine 7 the chain is Cytoplasmic. Residues leucine 8–threonine 28 traverse the membrane as a helical; Signal-anchor for type II membrane protein segment. Topologically, residues leucine 29–lysine 130 are extracellular. Positions 120 and 124 each coordinate heme.

It belongs to the CcmE/CycJ family.

The protein localises to the cell membrane. Functionally, heme chaperone required for the biogenesis of c-type cytochromes. Transiently binds heme delivered by CcmC and transfers the heme to apo-cytochromes in a process facilitated by CcmF and CcmH. The polypeptide is Cytochrome c-type biogenesis protein CcmE (Wolbachia pipientis wMel).